The sequence spans 249 residues: Proteasome subunit alpha type-7-1 (249 aa).

The residue at position 177 (serine 177) is a Phosphoserine.

This sequence belongs to the peptidase T1A family. In terms of assembly, the 26S proteasome consists of a 20S proteasome core and two 19S regulatory subunits. The 20S proteasome core is composed of 28 subunits that are arranged in four stacked rings, resulting in a barrel-shaped structure. The two end rings are each formed by seven alpha subunits, and the two central rings are each formed by seven beta subunits. The catalytic chamber with the active sites is on the inside of the barrel. Interacts with PI31; this interaction is reduced by PI31 ADP-ribosylation.

It localises to the cytoplasm. It is found in the nucleus. In terms of biological role, the proteasome is a multicatalytic proteinase complex which is characterized by its ability to cleave peptides with Arg, Phe, Tyr, Leu, and Glu adjacent to the leaving group at neutral or slightly basic pH. The proteasome has an ATP-dependent proteolytic activity. The sequence is that of Proteasome subunit alpha type-7-1 (Prosalpha4) from Drosophila melanogaster (Fruit fly).